The sequence spans 124 residues: Fluoride-specific ion channel FluC (124 aa).

4 consecutive transmembrane segments (helical) span residues 3 to 23, 34 to 54, 68 to 88, and 100 to 120; these read VLLI…VSNL, IGTL…FIFI, LLLI…IETF, and ALNV…GVLI. Na(+) contacts are provided by glycine 75 and threonine 78.

The protein belongs to the fluoride channel Fluc/FEX (TC 1.A.43) family.

The protein localises to the cell inner membrane. It carries out the reaction fluoride(in) = fluoride(out). Its activity is regulated as follows. Na(+) is not transported, but it plays an essential structural role and its presence is essential for fluoride channel function. In terms of biological role, fluoride-specific ion channel. Important for reducing fluoride concentration in the cell, thus reducing its toxicity. This is Fluoride-specific ion channel FluC from Coxiella burnetii (strain Dugway 5J108-111).